Here is a 292-residue protein sequence, read N- to C-terminus: MASLKDMRVRIASTKATQKITKAMQMVAASKLRRAQNAAEAARPYAEKMDTVISNIASAAAGSPNASPLLAGTGKDQVHLLLVCTGERGLSGAFNSAIVRLARDRAFALMNQGKEVKFFCVGRKGYEQLRRIFEKQIVETVELRTVRQLGFVNAEDIARKVLARFDAGEFDVCTLFYSRFQSVIAQVPTAQQVIPLAVEDAARSDGPAPSYEYEPEEDEILNGLLPRNLAVQIFRALLENNASFYGAQMTAMDNATRNAGEMIRKQTLIYNRTRQAMITKELIEIISGAEAV.

This sequence belongs to the ATPase gamma chain family. As to quaternary structure, F-type ATPases have 2 components, CF(1) - the catalytic core - and CF(0) - the membrane proton channel. CF(1) has five subunits: alpha(3), beta(3), gamma(1), delta(1), epsilon(1). CF(0) has three main subunits: a, b and c.

Its subcellular location is the cell inner membrane. Functionally, produces ATP from ADP in the presence of a proton gradient across the membrane. The gamma chain is believed to be important in regulating ATPase activity and the flow of protons through the CF(0) complex. In Nitrobacter winogradskyi (strain ATCC 25391 / DSM 10237 / CIP 104748 / NCIMB 11846 / Nb-255), this protein is ATP synthase gamma chain.